A 394-amino-acid chain; its full sequence is Phosphoglycerate kinase (394 aa).

Substrate contacts are provided by residues 21 to 23, arginine 36, 59 to 62, arginine 118, and arginine 151; these read DFN and HMGR. ATP contacts are provided by residues lysine 202, glutamate 324, and 350-353; that span reads GGDS.

It belongs to the phosphoglycerate kinase family. As to quaternary structure, monomer.

The protein localises to the cytoplasm. The catalysed reaction is (2R)-3-phosphoglycerate + ATP = (2R)-3-phospho-glyceroyl phosphate + ADP. The protein operates within carbohydrate degradation; glycolysis; pyruvate from D-glyceraldehyde 3-phosphate: step 2/5. This Exiguobacterium sibiricum (strain DSM 17290 / CCUG 55495 / CIP 109462 / JCM 13490 / 255-15) protein is Phosphoglycerate kinase.